We begin with the raw amino-acid sequence, 234 residues long: 1-(5-phosphoribosyl)-5-[(5-phosphoribosylamino)methylideneamino] imidazole-4-carboxamide isomerase (234 aa).

Residue aspartate 9 is the Proton acceptor of the active site. Aspartate 131 acts as the Proton donor in catalysis.

It belongs to the HisA/HisF family.

Its subcellular location is the cytoplasm. The catalysed reaction is 1-(5-phospho-beta-D-ribosyl)-5-[(5-phospho-beta-D-ribosylamino)methylideneamino]imidazole-4-carboxamide = 5-[(5-phospho-1-deoxy-D-ribulos-1-ylimino)methylamino]-1-(5-phospho-beta-D-ribosyl)imidazole-4-carboxamide. It participates in amino-acid biosynthesis; L-histidine biosynthesis; L-histidine from 5-phospho-alpha-D-ribose 1-diphosphate: step 4/9. This Staphylococcus aureus (strain NCTC 8325 / PS 47) protein is 1-(5-phosphoribosyl)-5-[(5-phosphoribosylamino)methylideneamino] imidazole-4-carboxamide isomerase.